Consider the following 509-residue polypeptide: Maturase K (509 aa).

This sequence belongs to the intron maturase 2 family. MatK subfamily.

The protein localises to the plastid. The protein resides in the chloroplast. Usually encoded in the trnK tRNA gene intron. Probably assists in splicing its own and other chloroplast group II introns. The polypeptide is Maturase K (Nicotiana sylvestris (Wood tobacco)).